Consider the following 216-residue polypeptide: Adenylate kinase (216 aa).

10 to 15 lines the ATP pocket; the sequence is GAGKGT. Residues 30–59 are NMP; that stretch reads STGDMIRETIKSDSEIGKELKKVLDAGQLV. AMP-binding positions include threonine 31, arginine 36, 57-59, and glutamine 92; that span reads QLV. The tract at residues 122 to 159 is LID; it reads GRRVHPASGRTYHTKFNPPKVEGKDDITGEDLITRTDD. ATP-binding positions include arginine 123 and 132-133; that span reads TY. Positions 156 and 167 each coordinate AMP. Glutamine 202 serves as a coordination point for ATP.

It belongs to the adenylate kinase family. In terms of assembly, monomer.

Its subcellular location is the cytoplasm. The catalysed reaction is AMP + ATP = 2 ADP. Its pathway is purine metabolism; AMP biosynthesis via salvage pathway; AMP from ADP: step 1/1. Catalyzes the reversible transfer of the terminal phosphate group between ATP and AMP. Plays an important role in cellular energy homeostasis and in adenine nucleotide metabolism. This chain is Adenylate kinase, found in Francisella philomiragia subsp. philomiragia (strain ATCC 25017 / CCUG 19701 / FSC 153 / O#319-036).